A 1004-amino-acid chain; its full sequence is Glutamate [NMDA] receptor subunit 1 (1004 aa).

The first 39 residues, 1 to 39, serve as a signal peptide directing secretion; the sequence is MAGTDSPAAARFVYRCLLFAPAIVVGLLLPLTLPPIAAA. Residues 40–585 are Extracellular-facing; sequence QRHTASDNPS…TLVSFLQPFS (546 aa). Residues N270, N326, N357, N409, N466, N493, and N513 are each glycosylated (N-linked (GlcNAc...) asparagine). Glycine-binding positions include 542-544 and R549; that span reads PLT. A helical transmembrane segment spans residues 586 to 606; that stretch reads NTLWILVMVSVHVVALVLYLL. At 607-663 the chain is on the cytoplasmic side; that stretch reads DRFSPFGRFKLSHSDSNEEKALNLSSAVWFAWGVLLNSGIGEGTPRSFSARVLGMVW. The helical transmembrane segment at 664 to 684 threads the bilayer; it reads AGFAMIIVASYTANLAAFLVL. Topologically, residues 685-843 are extracellular; that stretch reads ERPKTKLSGI…KTPNTLGLKN (159 aa). N705 is a glycosylation site (N-linked (GlcNAc...) asparagine). Positions 715 and 759 each coordinate glycine. The helical transmembrane segment at 844 to 864 threads the bilayer; the sequence is MAGVFILVGVGIAGGVGLIII. At 865-1004 the chain is on the cytoplasmic side; that stretch reads EVIYKKHQVK…YTSDVSHLVV (140 aa). Positions 980-1004 are disordered; it reads TRPQQNILPPRYSPGYTSDVSHLVV. Over residues 994-1004 the composition is skewed to polar residues; it reads GYTSDVSHLVV.

It belongs to the glutamate-gated ion channel (TC 1.A.10.1) family. Forms a heteromeric NMDA channel with Nmdar2.

Its subcellular location is the cell membrane. It is found in the postsynaptic cell membrane. It localises to the postsynaptic density. NMDA receptor subtype of glutamate-gated ion channels with high calcium permeability and voltage-dependent sensitivity to magnesium. Mediated by glycine. This protein plays a key role in synaptic plasticity, synaptogenesis, excitotoxicity, memory acquisition and learning. It mediates neuronal functions in glutamate neurotransmission. Is involved in the cell surface targeting of NMDA receptors. Plays a role in associative learning and in long-term memory consolidation. The polypeptide is Glutamate [NMDA] receptor subunit 1 (Drosophila pseudoobscura pseudoobscura (Fruit fly)).